A 546-amino-acid polypeptide reads, in one-letter code: Casein kinase I homolog 2 (546 aa).

2 stretches are compositionally biased toward polar residues: residues 1-33 and 44-55; these read MSQV…SNVR and HVSSNLNHNTGN. The segment at 1 to 67 is disordered; the sequence is MSQVQSPLTA…ASYSGSQSRD (67 aa). Ser-2 carries the N-acetylserine modification. One can recognise a Protein kinase domain in the interval 76–360; sequence YKIGKKIGEG…ETADGQYDWM (285 aa). ATP-binding positions include 82-90 and Lys-105; that span reads IGEGSFGVL. The active-site Proton acceptor is the Asp-195. Disordered regions lie at residues 373 to 425 and 443 to 546; these read NKKP…QAQA and QQAN…LGCC. The span at 412–425 shows a compositional bias: low complexity; sequence QQQQQQQAQAQAQA. The span at 453 to 465 shows a compositional bias: basic and acidic residues; sequence DDSHYDEEREASK. Ser-455 bears the Phosphoserine mark. Lys-465 participates in a covalent cross-link: Glycyl lysine isopeptide (Lys-Gly) (interchain with G-Cter in ubiquitin). The segment covering 475–496 has biased composition (low complexity); sequence QQQTQQKYAQQQQKQMQQKSKQ. A compositionally biased stretch (polar residues) spans 497–530; that stretch reads FANTGANGQTNKYPYNAQPTANDEQNAKNAAQDR. Low complexity predominate over residues 533-546; it reads NKSSKGFFSKLGCC. S-palmitoyl cysteine attachment occurs at residues Cys-545 and Cys-546.

Belongs to the protein kinase superfamily. CK1 Ser/Thr protein kinase family. Casein kinase I subfamily. In terms of processing, palmitoylated by AKR1, which is required for proper plasma membrane localization of YCK2.

It localises to the cell membrane. It catalyses the reaction L-seryl-[protein] + ATP = O-phospho-L-seryl-[protein] + ADP + H(+). It carries out the reaction L-threonyl-[protein] + ATP = O-phospho-L-threonyl-[protein] + ADP + H(+). Functionally, casein kinases are operationally defined by their preferential utilization of acidic proteins such as caseins as substrates. The sequence is that of Casein kinase I homolog 2 (YCK2) from Saccharomyces cerevisiae (strain ATCC 204508 / S288c) (Baker's yeast).